A 330-amino-acid chain; its full sequence is Peroxidase 42 (330 aa).

The first 23 residues, 1 to 23, serve as a signal peptide directing secretion; the sequence is MGGKGVMMVAILCLWALSATSEA. 4 cysteine pairs are disulfide-bonded: cysteine 40–cysteine 119, cysteine 73–cysteine 78, cysteine 125–cysteine 323, and cysteine 204–cysteine 231. The active-site Proton acceptor is the histidine 71. Residues aspartate 72, valine 75, aspartate 79, and serine 81 each coordinate Ca(2+). Substrate is bound at residue proline 167. An N-linked (GlcNAc...) asparagine glycan is attached at asparagine 170. Histidine 197 lines the heme b pocket. Serine 198 provides a ligand contact to Ca(2+). 3 residues coordinate Ca(2+): aspartate 247, threonine 250, and aspartate 255.

The protein belongs to the peroxidase family. Classical plant (class III) peroxidase subfamily. Heme b serves as cofactor. The cofactor is Ca(2+). Constitutively expressed in the whole plant, with the highest expression in roots.

The protein resides in the secreted. It catalyses the reaction 2 a phenolic donor + H2O2 = 2 a phenolic radical donor + 2 H2O. In terms of biological role, removal of H(2)O(2), oxidation of toxic reductants, biosynthesis and degradation of lignin, suberization, auxin catabolism, response to environmental stresses such as wounding, pathogen attack and oxidative stress. These functions might be dependent on each isozyme/isoform in each plant tissue. Its function is as follows. Might function as heat shock-like defense protein. The chain is Peroxidase 42 (PER42) from Arabidopsis thaliana (Mouse-ear cress).